We begin with the raw amino-acid sequence, 173 residues long: Adenine phosphoribosyltransferase (173 aa).

Belongs to the purine/pyrimidine phosphoribosyltransferase family. As to quaternary structure, homodimer.

Its subcellular location is the cytoplasm. It catalyses the reaction AMP + diphosphate = 5-phospho-alpha-D-ribose 1-diphosphate + adenine. It participates in purine metabolism; AMP biosynthesis via salvage pathway; AMP from adenine: step 1/1. In terms of biological role, catalyzes a salvage reaction resulting in the formation of AMP, that is energically less costly than de novo synthesis. In Ureaplasma parvum serovar 3 (strain ATCC 27815 / 27 / NCTC 11736), this protein is Adenine phosphoribosyltransferase.